A 444-amino-acid polypeptide reads, in one-letter code: Tubulin beta-4 chain (444 aa).

GTP contacts are provided by Gln11, Glu69, Ser138, Gly142, Thr143, Gly144, Asn204, and Asn226. Glu69 contributes to the Mg(2+) binding site.

It belongs to the tubulin family. As to quaternary structure, dimer of alpha and beta chains. A typical microtubule is a hollow water-filled tube with an outer diameter of 25 nm and an inner diameter of 15 nM. Alpha-beta heterodimers associate head-to-tail to form protofilaments running lengthwise along the microtubule wall with the beta-tubulin subunit facing the microtubule plus end conferring a structural polarity. Microtubules usually have 13 protofilaments but different protofilament numbers can be found in some organisms and specialized cells. The cofactor is Mg(2+).

It is found in the cytoplasm. It localises to the cytoskeleton. In terms of biological role, tubulin is the major constituent of microtubules, a cylinder consisting of laterally associated linear protofilaments composed of alpha- and beta-tubulin heterodimers. Microtubules grow by the addition of GTP-tubulin dimers to the microtubule end, where a stabilizing cap forms. Below the cap, tubulin dimers are in GDP-bound state, owing to GTPase activity of alpha-tubulin. This chain is Tubulin beta-4 chain (TUBB4), found in Arabidopsis thaliana (Mouse-ear cress).